The primary structure comprises 993 residues: Nisin biosynthesis protein NisB (993 aa).

The helical transmembrane segment at 838–851 (AIFCADSKIIPNLL) threads the bilayer.

To B.subtilis SpaB and S.epidermidis EpiB.

The protein resides in the cell membrane. Its function is as follows. Involved in the post-translational modification of the lantibiotic nisin. This Lactococcus lactis subsp. lactis (Streptococcus lactis) protein is Nisin biosynthesis protein NisB (nisB).